We begin with the raw amino-acid sequence, 110 residues long: uncharacterized protein (110 aa).

A disordered region spans residues 38-62 (SVQQNARAEEAEAAAPPAEEDSLPD).

This is an uncharacterized protein from Mus musculus (Mouse).